Consider the following 313-residue polypeptide: Sorting nexin-20 (313 aa).

The interval 1 to 61 (MASPQHPGGP…MTTRELQEHW (61 aa)) is disordered. A Phosphoserine modification is found at serine 3. The segment covering 29–38 (PPGPDLPCPG) has biased composition (pro residues). A compositionally biased stretch (polar residues) spans 45-55 (GPTSNSNMTTR). The 118-residue stretch at 71–188 (VRLLFEIASA…DFLTRPELCE (118 aa)) folds into the PX domain. A 1,2-diacyl-sn-glycero-3-phospho-(1D-myo-inositol-3-phosphate) is bound by residues arginine 113, serine 115, lysine 140, and arginine 154.

This sequence belongs to the sorting nexin family. Interacts with SELPLG. Interaction with SELPLG is controversial.

Its subcellular location is the early endosome membrane. It is found in the cell membrane. It localises to the cytoplasm. The protein localises to the nucleus. Its function is as follows. May play a role in cellular vesicle trafficking. Has been proposed to function as a sorting protein that targets SELPLG into endosomes, but has no effect on SELPLG internalization from the cell surface, or on SELPLG-mediated cell-cell adhesion. In Rattus norvegicus (Rat), this protein is Sorting nexin-20 (Snx20).